Consider the following 124-residue polypeptide: Protein TAR1 (124 aa).

The interval 80-124 (KNRTPRHTGFSPSMTSCSKEHRQGTAPKLPSPNYNSGTEGTRFQI) is disordered. The segment covering 111–124 (PNYNSGTEGTRFQI) has biased composition (polar residues).

It localises to the mitochondrion. May be involved in mtDNA stability or mitochondrial gene expression regulation at the post-transcriptional level. The sequence is that of Protein TAR1 (TAR1) from Saccharomyces cerevisiae (strain ATCC 204508 / S288c) (Baker's yeast).